The chain runs to 272 residues: MRQVAIYGKGGIGKSTTTQNLTSGLAELGKKIMVVGCDPKADSTRLLLGGLAQKTVLDTLREEGEDVDLDTIMKTGFGNIKCVESGGPEPGVGCAGRGIITSINMLEQLGAYEDELDYVFYDVLGDVVCGGFAMPIREGKAKEIYIVASGEMMAMYAANNISKGISKFANTGGVRLGGIICNSRKVKNEKELLEAFAKELGTQLIYFVPRSHEVQKAEINKQTVIQFNPKDEQADEYRALAKAIDGNDMYVVPKPMAQDKLEAILMEYGLLE.

8–15 serves as a coordination point for ATP; that stretch reads GKGGIGKS. Cysteine 94 lines the [4Fe-4S] cluster pocket. Arginine 97 is subject to ADP-ribosylarginine; by dinitrogenase reductase ADP-ribosyltransferase. Cysteine 129 is a [4Fe-4S] cluster binding site.

Belongs to the NifH/BchL/ChlL family. In terms of assembly, homodimer. It depends on [4Fe-4S] cluster as a cofactor. In terms of processing, the reversible ADP-ribosylation of Arg-97 inactivates the nitrogenase reductase and regulates nitrogenase activity.

The catalysed reaction is N2 + 8 reduced [2Fe-2S]-[ferredoxin] + 16 ATP + 16 H2O = H2 + 8 oxidized [2Fe-2S]-[ferredoxin] + 2 NH4(+) + 16 ADP + 16 phosphate + 6 H(+). Its function is as follows. The key enzymatic reactions in nitrogen fixation are catalyzed by the nitrogenase complex, which has 2 components: the iron protein and the molybdenum-iron protein. The sequence is that of Nitrogenase iron protein from Clostridium acetobutylicum (strain ATCC 824 / DSM 792 / JCM 1419 / IAM 19013 / LMG 5710 / NBRC 13948 / NRRL B-527 / VKM B-1787 / 2291 / W).